Here is a 1503-residue protein sequence, read N- to C-terminus: Mitogen-activated protein kinase-binding protein 1 (1503 aa).

12 WD repeats span residues 89 to 130 (SSRK…QVAE), 133 to 174 (EHKY…VVAS), 176 to 214 (KVSS…TSKV), 271 to 310 (VELR…FLST), 337 to 376 (ARYP…KVGK), 382 to 431 (YHSS…VHGS), 472 to 511 (DPRV…EMLK), 514 to 556 (AHDS…SLQQ), 560 to 601 (EHSS…EGVQ), 609 to 648 (VRKT…QKKL), 654 to 693 (GEDG…CVAT), and 696 to 735 (GHSE…TISM). Disordered regions lie at residues 745 to 817 (RQRG…SSPA), 874 to 917 (LAPS…RLQT), and 951 to 1176 (VYPE…SWAS). Acidic residues predominate over residues 784–796 (KEGEDEGTEEEEL). Composition is skewed to polar residues over residues 905 to 917 (CVSQ…RLQT) and 957 to 972 (DSPT…QAPT). Positions 1028–1043 (DLEEPAEGDEDEEEEG) are enriched in acidic residues. Over residues 1058–1068 (PDQEQFLKQHF) the composition is skewed to basic and acidic residues. The span at 1089–1129 (SQSISSRFLLQVQTSPLREPSLSSSGLALTSRPDQVSQVSG) shows a compositional bias: polar residues. The residue at position 1193 (serine 1193) is a Phosphoserine. Disordered stretches follow at residues 1217-1238 (QGSL…SYQN) and 1369-1391 (QGPE…SSRP).

Can form homodimers (via C-terminus). Interacts (via C-terminus) with WDR62 (via C-terminus). Interacts with MAPK9. Interacts (via N-terminus) with NOD2; the interaction is enhanced in presence of muramyl dipeptide (MDP). Interacts with MAPK10. As to expression, ubiquitously expressed. Highest expression observed in brain.

Its subcellular location is the cytoplasm. It is found in the nucleus. The protein resides in the cytoskeleton. It localises to the spindle pole. Its function is as follows. Negative regulator of NOD2 function. It down-regulates NOD2-induced processes such as activation of NF-kappa-B signaling, IL8 secretion and antibacterial response. Involved in JNK signaling pathway. The sequence is that of Mitogen-activated protein kinase-binding protein 1 (Mapkbp1) from Mus musculus (Mouse).